Consider the following 289-residue polypeptide: Early E4 34 kDa protein (289 aa).

It belongs to the adenoviridae E4 30 to 34 kDa protein family. In terms of assembly, interacts with E1B-55k.

Its subcellular location is the host nucleus. It localises to the host cytoplasm. Plays a major role to prevent cellular inhibition of viral genome replication by nuclear bodies. Assembles an SCF-like E3 ubiquitin ligase complex based on the cellular proteins ELOB, ELOC, CUL5 and RBX1, in cooperation with viral E1B-55K. This viral RING-type ligase ubiquitinates cellular substrates prior to proteasomal degradation: p53/TP53, LIG4, MRE11-RAD50-NBS1 (MRN) complex, ITGA3, DAXX and BLM. This chain is Early E4 34 kDa protein, found in Human adenovirus F serotype 40 (HAdV-40).